The chain runs to 239 residues: U2 small nuclear ribonucleoprotein A' (239 aa).

LRR repeat units lie at residues 19-40, 42-63, 64-85, and 88-109; these read KETE…GVLR, VHDA…PRMK, RLQT…IGKV, and NLKT…DPLA. Positions 122–160 constitute an LRRCT domain; sequence NPVAQKQYYRLYLIWRIPSLHILDFERVRRNERLRAEEV.

This sequence belongs to the U2 small nuclear ribonucleoprotein A family. As to quaternary structure, belongs to the 40S cdc5-associated complex (or cwf complex), a spliceosome sub-complex reminiscent of a late-stage spliceosome composed of the U2, U5 and U6 snRNAs and at least brr2, cdc5, cwf2/prp3, cwf3/syf1, cwf4/syf3, cwf5/ecm2, spp42/cwf6, cwf7/spf27, cwf8, cwf9, cwf10, cwf11, cwf12, prp45/cwf13, cwf14, cwf15, cwf16, cwf17, cwf18, cwf19, cwf20, cwf21, cwf22, cwf23, cwf24, cwf25, cwf26, cyp7/cwf27, cwf28, cwf29/ist3, lea1, msl1, prp5/cwf1, prp10, prp12/sap130, prp17, prp22, sap61, sap62, sap114, sap145, slu7, smb1, smd1, smd3, smf1, smg1 and syf2.

It localises to the nucleus. Functionally, involved in pre-mRNA splicing. This protein is associated with sn-RNP U2. It helps the A' protein to bind stem loop IV of U2 snRNA. This Schizosaccharomyces pombe (strain 972 / ATCC 24843) (Fission yeast) protein is U2 small nuclear ribonucleoprotein A' (lea1).